The primary structure comprises 249 residues: Glucosamine-6-phosphate deaminase 2 (249 aa).

The Proton acceptor; for enolization step role is filled by Asp-67. The For ring-opening step role is filled by Asn-136. His-138 (proton acceptor; for ring-opening step) is an active-site residue. The For ring-opening step role is filled by Glu-143.

Belongs to the glucosamine/galactosamine-6-phosphate isomerase family. NagB subfamily.

The catalysed reaction is alpha-D-glucosamine 6-phosphate + H2O = beta-D-fructose 6-phosphate + NH4(+). The protein operates within amino-sugar metabolism; N-acetylneuraminate degradation; D-fructose 6-phosphate from N-acetylneuraminate: step 5/5. In terms of biological role, catalyzes the reversible isomerization-deamination of glucosamine 6-phosphate (GlcN6P) to form fructose 6-phosphate (Fru6P) and ammonium ion. Required for growth on glucosamine and also provides the majority of GlcN6P deaminase activity during growth on N-acetylglucosamine (GlcNAc). The sequence is that of Glucosamine-6-phosphate deaminase 2 from Bacillus subtilis (strain 168).